The primary structure comprises 669 residues: Translation factor GUF1, mitochondrial (669 aa).

Residues 1–49 constitute a mitochondrion transit peptide; sequence MWTLVGRGWGCARALAPRATGAALLVAPGPRSAPTLGAAPESWATDRLY. Positions 66 to 247 constitute a tr-type G domain; it reads ENIRNFSIVA…AIIERIPPPK (182 aa). Residues 75–82, 140–144, and 194–197 contribute to the GTP site; these read AHVDHGKS, DTPGH, and NKID.

Belongs to the TRAFAC class translation factor GTPase superfamily. Classic translation factor GTPase family. LepA subfamily.

The protein localises to the mitochondrion inner membrane. It carries out the reaction GTP + H2O = GDP + phosphate + H(+). Functionally, promotes mitochondrial protein synthesis. May act as a fidelity factor of the translation reaction, by catalyzing a one-codon backward translocation of tRNAs on improperly translocated ribosomes. Binds to mitochondrial ribosomes in a GTP-dependent manner. In Homo sapiens (Human), this protein is Translation factor GUF1, mitochondrial.